The chain runs to 352 residues: UDP-N-acetylglucosamine--N-acetylmuramyl-(pentapeptide) pyrophosphoryl-undecaprenol N-acetylglucosamine transferase (352 aa).

2 residues coordinate UDP-N-acetyl-alpha-D-glucosamine: Ser195 and Gln287.

Belongs to the glycosyltransferase 28 family. MurG subfamily.

The protein localises to the cell membrane. The enzyme catalyses Mur2Ac(oyl-L-Ala-gamma-D-Glu-L-Lys-D-Ala-D-Ala)-di-trans,octa-cis-undecaprenyl diphosphate + UDP-N-acetyl-alpha-D-glucosamine = beta-D-GlcNAc-(1-&gt;4)-Mur2Ac(oyl-L-Ala-gamma-D-Glu-L-Lys-D-Ala-D-Ala)-di-trans,octa-cis-undecaprenyl diphosphate + UDP + H(+). The protein operates within cell wall biogenesis; peptidoglycan biosynthesis. Functionally, cell wall formation. Catalyzes the transfer of a GlcNAc subunit on undecaprenyl-pyrophosphoryl-MurNAc-pentapeptide (lipid intermediate I) to form undecaprenyl-pyrophosphoryl-MurNAc-(pentapeptide)GlcNAc (lipid intermediate II). This chain is UDP-N-acetylglucosamine--N-acetylmuramyl-(pentapeptide) pyrophosphoryl-undecaprenol N-acetylglucosamine transferase, found in Streptococcus pneumoniae (strain 70585).